The following is a 257-amino-acid chain: Gasdermin-like protein rcd-1-1 (257 aa).

The protein belongs to the gasdermin family. Heterooligomer; the heterooligomer with rcd-1-2 forms a ring-shaped pore complex when inserted in the membrane.

It localises to the cytoplasm. It is found in the cell membrane. Gasdermin-like protein involved in heterokaryon incompatibility, a process that ensures that during spontaneous vegetative cell fusion, only compatible cells from the same colony survive (non-self-recognition). In N.crassa, the rcd-1 locus exists as 2 incompatible alleles, rcd-1-1 (this entry) and rcd-1-2 (AC P0DW10). During the allorecognition process, forms a heterooligomer with rcd-1-2, thereby forming a functional gasdermin-like complex that binds to membranes and forms pores, triggering cell death. Binds negatively charged phospholipids, such as cardiolipin and phosphatidylserine. Also binds to phosphoinositides, preferentially to phosphatidylinositol-3-phosphate (PtdIns-3-P), PtdIns-5-P and PtdIns-3,5-P2. In Neurospora crassa (strain ATCC 24698 / 74-OR23-1A / CBS 708.71 / DSM 1257 / FGSC 987), this protein is Gasdermin-like protein rcd-1-1.